An 83-amino-acid chain; its full sequence is MAHKKSGGVAKNGRDSLPKYLGVKVGDGQIVKAGNILVRQRGTRFYPGKNVGMGRDFTLFALKDGRVKFETKNNKKYVSVYEE.

The protein belongs to the bacterial ribosomal protein bL27 family.

The sequence is that of Large ribosomal subunit protein bL27 (rpmA) from Thermotoga maritima (strain ATCC 43589 / DSM 3109 / JCM 10099 / NBRC 100826 / MSB8).